Consider the following 558-residue polypeptide: MTKFVFVTGGVVSSIGKGIVAASLGRLFKSRDYSVSILKLDPYINVDPGTMSPFQHGEVFVTDDGAETDLDLGHYERFTDTPMSRLNSVTTGSIYQAVINKERRGDYMGGTVQVIPHITNEIKERIHRVAKNTNPDIVIIEIGGTVGDIESLPFLEAIRQFRKEVGRNNVVYMHVTLIPWIPAAGEMKTKPTQHSVKELRSIGIQPDVLVCRCDRPLQPGLKEKLSAFCDVPVASVIMSQDASTIYQVPLNLEEEGLAQQTLELLNLEPRQPDLSQWRTLVQQMQSPSKQIEVALVGKYVQLSDAYLSVVEALGHAAIATNSVVKIRWVSAEDLENDSAEQHLEGVSGIVVPGGFGVRGVDGKVRAIEYARHHNIPFLGLCMGMQCSVIEWARNIAHLEKANSAEFDRESPNPVINLLPEQQDVVDLGGTMRLGLYPCRLTPDTQTFALYKQEVVYERHRHRYEFNNAYRSLFLETGYVISGTSPDGRLVEIIELPGHPFFIATQFHPEFRSRPSTPHPLFLGFVKASVDYNHVSLDSKIQTHIELVTEENTPSIALG.

The amidoligase domain stretch occupies residues 1 to 267 (MTKFVFVTGG…AQQTLELLNL (267 aa)). Serine 13 is a binding site for CTP. Position 13 (serine 13) interacts with UTP. ATP is bound by residues 14–19 (SIGKGI) and aspartate 71. Positions 71 and 141 each coordinate Mg(2+). CTP contacts are provided by residues 148-150 (DIE), 188-193 (KTKPTQ), and lysine 224. Residues 188-193 (KTKPTQ) and lysine 224 each bind UTP. Residues 292 to 534 (EVALVGKYVQ…VKASVDYNHV (243 aa)) enclose the Glutamine amidotransferase type-1 domain. Residue glycine 354 participates in L-glutamine binding. Catalysis depends on cysteine 381, which acts as the Nucleophile; for glutamine hydrolysis. L-glutamine contacts are provided by residues 382-385 (MGMQ), glutamate 405, and arginine 462. Catalysis depends on residues histidine 507 and glutamate 509.

Belongs to the CTP synthase family. As to quaternary structure, homotetramer.

It catalyses the reaction UTP + L-glutamine + ATP + H2O = CTP + L-glutamate + ADP + phosphate + 2 H(+). The catalysed reaction is L-glutamine + H2O = L-glutamate + NH4(+). The enzyme catalyses UTP + NH4(+) + ATP = CTP + ADP + phosphate + 2 H(+). Its pathway is pyrimidine metabolism; CTP biosynthesis via de novo pathway; CTP from UDP: step 2/2. Allosterically activated by GTP, when glutamine is the substrate; GTP has no effect on the reaction when ammonia is the substrate. The allosteric effector GTP functions by stabilizing the protein conformation that binds the tetrahedral intermediate(s) formed during glutamine hydrolysis. Inhibited by the product CTP, via allosteric rather than competitive inhibition. In terms of biological role, catalyzes the ATP-dependent amination of UTP to CTP with either L-glutamine or ammonia as the source of nitrogen. Regulates intracellular CTP levels through interactions with the four ribonucleotide triphosphates. This Gloeothece citriformis (strain PCC 7424) (Cyanothece sp. (strain PCC 7424)) protein is CTP synthase.